Consider the following 240-residue polypeptide: Orotidine 5'-phosphate decarboxylase (240 aa).

Substrate is bound by residues D15, K37, 64 to 73 (DLKYHDIPNT), T127, R188, Q197, G217, and R218. K66 (proton donor) is an active-site residue.

Belongs to the OMP decarboxylase family. Type 1 subfamily. Homodimer.

The enzyme catalyses orotidine 5'-phosphate + H(+) = UMP + CO2. It participates in pyrimidine metabolism; UMP biosynthesis via de novo pathway; UMP from orotate: step 2/2. In terms of biological role, catalyzes the decarboxylation of orotidine 5'-monophosphate (OMP) to uridine 5'-monophosphate (UMP). The polypeptide is Orotidine 5'-phosphate decarboxylase (Geobacter sp. (strain M21)).